Here is a 289-residue protein sequence, read N- to C-terminus: GTPase Era (289 aa).

An Era-type G domain is found at Lys2–Glu167. The interval Gly10–Ser17 is G1. Gly10–Ser17 is a GTP binding site. Residues Asn36–Arg40 are G2. The interval Asp57–Gly60 is G3. GTP-binding positions include Asp57 to Leu61 and Thr116 to Asp119. Residues Thr116–Asp119 form a G4 region. Residues Leu146–Val148 are G5. In terms of domain architecture, KH type-2 spans Val198 to Lys274.

Belongs to the TRAFAC class TrmE-Era-EngA-EngB-Septin-like GTPase superfamily. Era GTPase family. As to quaternary structure, monomer.

Its subcellular location is the cytoplasm. It is found in the cell inner membrane. Its function is as follows. An essential GTPase that binds both GDP and GTP, with rapid nucleotide exchange. Plays a role in 16S rRNA processing and 30S ribosomal subunit biogenesis and possibly also in cell cycle regulation and energy metabolism. The sequence is that of GTPase Era from Campylobacter fetus subsp. fetus (strain 82-40).